The chain runs to 437 residues: GTPase Obg (437 aa).

In terms of domain architecture, Obg spans 2–160 (SMFLDTAKIS…RQLELELKIL (159 aa)). Residues 161 to 338 (ADVGLVGFPS…LLEATAELLA (178 aa)) enclose the OBG-type G domain. GTP is bound by residues 167-174 (GFPSVGKS), 192-196 (FTTIV), 214-217 (DLPG), 284-287 (NKMD), and 319-321 (SSL). Positions 174 and 194 each coordinate Mg(2+). In terms of domain architecture, OCT spans 359 to 437 (GFAEAEKDFE…IGKFEFEFVD (79 aa)).

Belongs to the TRAFAC class OBG-HflX-like GTPase superfamily. OBG GTPase family. As to quaternary structure, monomer. Mg(2+) is required as a cofactor.

The protein resides in the cytoplasm. An essential GTPase which binds GTP, GDP and possibly (p)ppGpp with moderate affinity, with high nucleotide exchange rates and a fairly low GTP hydrolysis rate. Plays a role in control of the cell cycle, stress response, ribosome biogenesis and in those bacteria that undergo differentiation, in morphogenesis control. The polypeptide is GTPase Obg (Streptococcus pyogenes serotype M18 (strain MGAS8232)).